The sequence spans 984 residues: PAX-interacting protein 1 (984 aa).

BRCT domains are found at residues 8-93 (VPEE…GFSP) and 94-183 (ESCQ…LYHP). The interaction with PAGR1 stretch occupies residues 94–183 (ESCQIFFGIT…TRKDEALYHP (90 aa)). Disordered stretches follow at residues 187–271 (VYEE…PAEV) and 417–509 (QQHL…LFGH). Over residues 188–208 (YEEEEEEEEEEEGAGNEEPDS) the composition is skewed to acidic residues. Over residues 217–229 (KSSPASSQEGSPS) the composition is skewed to low complexity. Ser-227 and Ser-235 each carry phosphoserine. A compositionally biased stretch (pro residues) spans 424–454 (PYPPPPPHPFPPPPAHPHQFPQPPLQRPQPP). Over residues 455–485 (LQQQQLSHLQQQQLQHLQRLQQMQPTPTAQL) the composition is skewed to low complexity. A compositionally biased stretch (pro residues) spans 486–499 (PGPPAQALQPPPPQ). Residues 505–984 (PLFGHDPAVE…TLDYESYKFN (480 aa)) are interaction with TP53BP1. BRCT domains are found at residues 516 to 609 (PEEG…RALH) and 616 to 704 (PGGK…TQYG). The short motif at 583–600 (RKRCITAHWLNTVLKKKK) is the Nuclear localization signal element. The disordered stretch occupies residues 750–771 (KQNEVTNVQPSSKRARIEDIPP). The segment covering 752–761 (NEVTNVQPSS) has biased composition (polar residues). BRCT domains are found at residues 781-862 (TPFV…NYLL) and 883-924 (HASP…QPSF).

In terms of assembly, interacts with the C-terminal transactivation domain of PAX2. Forms a constitutive complex with PAGR1 independently of the MLL2/MLL3 complex. Interacts with TP53BP1 (when phosphorylated at the N-terminus by ATM). Interacts with HLTF. Component of the KMT2 family MLL2/MLL3 complex (also named ASCOM complex), at least composed of the HMTs KMT2D and/or KMT2C, the common subunits ASH2L, RBBP5, WDR5 and DPY30, and the complex type-specific subunits PAXIP1/PTIP, PAGR1, NCOA6 and KDM6A; required for the association of PAGR1 with the MLL2/MLL3 complex. Interacts with NUPR1; this interaction prevents PAXIP1 inhibition of PAX2 transcription factor activity.

It localises to the nucleus matrix. Its subcellular location is the chromosome. Involved in DNA damage response and in transcriptional regulation through histone methyltransferase (HMT) complexes. Plays a role in early development. In DNA damage response is required for cell survival after ionizing radiation. In vitro shown to be involved in the homologous recombination mechanism for the repair of double-strand breaks (DSBs). Its localization to DNA damage foci requires RNF8 and UBE2N. Recruits TP53BP1 to DNA damage foci and, at least in particular repair processes, effective DNA damage response appears to require the association with TP53BP1 phosphorylated by ATM at 'Ser-25'. Together with TP53BP1 regulates ATM association. Proposed to recruit PAGR1 to sites of DNA damage and the PAGR1:PAXIP1 complex is required for cell survival in response to DNA damage; the function is probably independent of MLL-containing histone methyltransferase (HMT) complexes. However, this function has been questioned. Promotes ubiquitination of PCNA following UV irradiation and may regulate recruitment of polymerase eta and RAD51 to chromatin after DNA damage. Proposed to be involved in transcriptional regulation by linking MLL-containing histone methyltransferase (HMT) complexes to gene promoters by interacting with promoter-bound transcription factors such as PAX2. Associates with gene promoters that are known to be regulated by KMT2D/MLL2. During immunoglobulin class switching in activated B-cells is involved in trimethylation of histone H3 at 'Lys-4' and in transcription initiation of downstream switch regions at the immunoglobulin heavy-chain (Igh) locus; this function appears to involve the recruitment of MLL-containing HMT complexes. Conflictingly, its function in transcriptional regulation during immunoglobulin class switching is reported to be independent of the MLL2/MLL3 complex. The polypeptide is PAX-interacting protein 1 (PAXIP1) (Bos taurus (Bovine)).